Here is a 257-residue protein sequence, read N- to C-terminus: Transmembrane protein 101 (257 aa).

A run of 8 helical transmembrane segments spans residues 21-40 (VLLTRCPFWGCFSQLMLYAE), 52-72 (VPYLYFDMGAAVLCASFMSFG), 77-97 (WFALGAALQLAISTYAAYVGG), 110-130 (YSRTVAIIGGFLVLASGAGEL), 139-159 (SLQSTGQVFLGVYLVCVAYSL), 182-202 (LFFVLYGVLALAFLSGYYVTL), 206-226 (ILAVLLPPVMLLIDGNVAYWH), and 233-253 (FWNQMKLLGESVGIFGAAVIL).

The protein localises to the membrane. In terms of biological role, may activate NF-kappa-B signaling pathways. This is Transmembrane protein 101 (TMEM101) from Bos taurus (Bovine).